A 401-amino-acid polypeptide reads, in one-letter code: Argininosuccinate synthase (401 aa).

Residues 11–19 (AYSGGLDTS) and Ala-38 each bind ATP. Tyr-89 and Ser-94 together coordinate L-citrulline. ATP is bound at residue Gly-119. Residues Thr-121, Asn-125, and Asp-126 each coordinate L-aspartate. Asn-125 lines the L-citrulline pocket. L-citrulline is bound by residues Arg-129, Ser-180, Ser-189, Glu-265, and Tyr-277.

This sequence belongs to the argininosuccinate synthase family. Type 1 subfamily. Homotetramer.

The protein localises to the cytoplasm. It carries out the reaction L-citrulline + L-aspartate + ATP = 2-(N(omega)-L-arginino)succinate + AMP + diphosphate + H(+). The protein operates within amino-acid biosynthesis; L-arginine biosynthesis; L-arginine from L-ornithine and carbamoyl phosphate: step 2/3. The sequence is that of Argininosuccinate synthase from Syntrophus aciditrophicus (strain SB).